Consider the following 248-residue polypeptide: Ras-like protein family member 11B (248 aa).

The segment at 29 to 246 (AGRRLVKIAV…ALSAKVRTVT (218 aa)) is small GTPase-like. GTP-binding positions include 40-47 (GASGVGKT), 87-94 (DTPGIQVH), and 152-155 (NKAD). The segment at 205-226 (QQPSSTPEKRRTSLIPRPKSPN) is disordered.

This sequence belongs to the small GTPase superfamily. Ras family. As to expression, widely expressed with highest levels in placenta and primary macrophages.

The catalysed reaction is GTP + H2O = GDP + phosphate + H(+). This Homo sapiens (Human) protein is Ras-like protein family member 11B.